The primary structure comprises 713 residues: Leucine-rich repeat neuronal protein 2 (713 aa).

The N-terminal stretch at Met-1 to Ala-18 is a signal peptide. Topologically, residues Ala-19 to Gly-630 are extracellular. The 50-residue stretch at Val-20 to Ala-69 folds into the LRRNT domain. 12 LRR repeats span residues Gly-70–Tyr-91, Asn-94–Ala-115, Gln-118–Gly-139, Ser-142–Gly-163, Asn-166–Met-187, Asn-190–Pro-211, Asn-214–Gly-235, Ser-238–Gln-259, Gly-262–Asn-283, His-286–Ala-305, Glu-311–His-333, and Gln-336–Ser-357. Asn-94 carries N-linked (GlcNAc...) asparagine glycosylation. Residues Asn-369–Pro-422 form the LRRCT domain. The N-linked (GlcNAc...) asparagine glycan is linked to Asn-381. An Ig-like C2-type domain is found at Pro-422 to Ser-511. A disulfide bridge connects residues Cys-445 and Cys-497. Asn-555 and Asn-583 each carry an N-linked (GlcNAc...) asparagine glycan. The chain crosses the membrane as a helical span at residues Leu-631 to Gly-651. At Thr-652–Ser-713 the chain is on the cytoplasmic side.

As to expression, overamplified in malignant gliomas.

It is found in the membrane. This chain is Leucine-rich repeat neuronal protein 2 (LRRN2), found in Homo sapiens (Human).